We begin with the raw amino-acid sequence, 439 residues long: UPF0597 protein Dalk_4447 (439 aa).

Belongs to the UPF0597 family.

The polypeptide is UPF0597 protein Dalk_4447 (Desulfatibacillum aliphaticivorans).